The sequence spans 838 residues: Phosphatidylethanolamine N-methyltransferase 1 (838 aa).

Topologically, residues 1-48 are lumenal; sequence MATEIITEKKEIVARTRSSGITFNPPVTHDMVRSLFDPTIKKSFLECC. The chain crosses the membrane as a helical span at residues 49–69; that stretch reads ITLTILANFVLCYYLINWFGL. Topologically, residues 70–73 are cytoplasmic; the sequence is SQAK. A helical membrane pass occupies residues 74–94; the sequence is LIFLIQYVYWRLAYNLGIGII. The Lumenal portion of the chain corresponds to 95-157; it reads LHYQSHYESL…ELNCWLLFRQ (63 aa). The helical transmembrane segment at 158 to 178 threads the bilayer; the sequence is FVDLILMQDFTTYIIYVYLSL. Residues 179-184 lie on the Cytoplasmic side of the membrane; that stretch reads PTDVSS. Residues 185-205 traverse the membrane as a helical segment; sequence LINWKSLIGIAMILFNIWVKI. The Lumenal segment spans residues 206–236; sequence DAHRVVKDYAWYWGDFFFLQDAELTFDGVFN. The helical transmembrane segment at 237-257 threads the bilayer; it reads ISPHPMYSIGYLGYYGLSLIC. Topologically, residues 258–261 are cytoplasmic; it reads GDYR. The chain crosses the membrane as a helical span at residues 262 to 282; the sequence is VLLVSVGGHFLQFLFLKYVES. At 283–328 the chain is on the lumenal side; sequence PHIERTYGSDSPSNSTQHQIDDLIAKENYDYSRPLINTGILFENFQ. The helical transmembrane segment at 329-349 threads the bilayer; that stretch reads FLRFSDYFTVSTILVLFSWFF. The Cytoplasmic segment spans residues 350–356; it reads TSKPSNN. The chain crosses the membrane as a helical span at residues 357 to 377; the sequence is FLFVLTLLTKLTTWLLTSWIL. The Lumenal segment spans residues 378-403; that stretch reads FQQSNRKWFTRLFLKNGYTQIYSYQQ. The chain crosses the membrane as a helical span at residues 404-424; it reads WQFLYNYSLIVTNTLLFLHTL. The Cytoplasmic segment spans residues 425–435; the sequence is SELYSIQSSDG. Residues 436–456 traverse the membrane as a helical segment; the sequence is LNNSHVIFGLLLCAIQIWCNV. The Lumenal portion of the chain corresponds to 457 to 517; it reads ETRDAISDFG…VLMTNFSKTN (61 aa). Residues 518–538 traverse the membrane as a helical segment; it reads VTLAVLWTVTNLIFVKLIEEP. Over 539-838 the chain is Cytoplasmic; the sequence is HVSKVYGNGT…DIKEVLDSLN (300 aa).

It belongs to the class VI-like SAM-binding methyltransferase superfamily. CHO2 family.

The protein resides in the endoplasmic reticulum membrane. The catalysed reaction is a 1,2-diacyl-sn-glycero-3-phosphoethanolamine + S-adenosyl-L-methionine = a 1,2-diacyl-sn-glycero-3-phospho-N-methylethanolamine + S-adenosyl-L-homocysteine + H(+). Its pathway is phospholipid metabolism; phosphatidylcholine biosynthesis. Its function is as follows. Catalyzes the first step of the methylation pathway of phosphatidylcholine biosynthesis, the SAM-dependent methylation of phosphatidylethanolamine (PE) to phosphatidylmonomethylethanolamine (PMME). In Vanderwaltozyma polyspora (strain ATCC 22028 / DSM 70294 / BCRC 21397 / CBS 2163 / NBRC 10782 / NRRL Y-8283 / UCD 57-17) (Kluyveromyces polysporus), this protein is Phosphatidylethanolamine N-methyltransferase 1 (CHO2-1).